The chain runs to 297 residues: Bifunctional protein FolD 1 (297 aa).

Residues 164-166 (GRS) and Thr230 contribute to the NADP(+) site.

The protein belongs to the tetrahydrofolate dehydrogenase/cyclohydrolase family. In terms of assembly, homodimer.

It carries out the reaction (6R)-5,10-methylene-5,6,7,8-tetrahydrofolate + NADP(+) = (6R)-5,10-methenyltetrahydrofolate + NADPH. The enzyme catalyses (6R)-5,10-methenyltetrahydrofolate + H2O = (6R)-10-formyltetrahydrofolate + H(+). It functions in the pathway one-carbon metabolism; tetrahydrofolate interconversion. In terms of biological role, catalyzes the oxidation of 5,10-methylenetetrahydrofolate to 5,10-methenyltetrahydrofolate and then the hydrolysis of 5,10-methenyltetrahydrofolate to 10-formyltetrahydrofolate. This Rhodococcus jostii (strain RHA1) protein is Bifunctional protein FolD 1.